The chain runs to 339 residues: Glyceraldehyde-3-phosphate dehydrogenase (339 aa).

Residues 12–13 (RI), D34, and K79 contribute to the NAD(+) site. D-glyceraldehyde 3-phosphate-binding positions include 150–152 (SCT), T181, 210–211 (TG), and R233. Catalysis depends on C151, which acts as the Nucleophile. N316 is an NAD(+) binding site.

Belongs to the glyceraldehyde-3-phosphate dehydrogenase family. In terms of assembly, homotetramer.

It is found in the cytoplasm. It carries out the reaction D-glyceraldehyde 3-phosphate + phosphate + NAD(+) = (2R)-3-phospho-glyceroyl phosphate + NADH + H(+). Its pathway is carbohydrate degradation; glycolysis; pyruvate from D-glyceraldehyde 3-phosphate: step 1/5. This chain is Glyceraldehyde-3-phosphate dehydrogenase (GPD), found in Cryptococcus neoformans var. neoformans serotype D (strain B-3501A) (Filobasidiella neoformans).